The sequence spans 70 residues: U-scoloptoxin(04)-Er3a (70 aa).

The signal sequence occupies residues 1 to 24; it reads MAAIRNLLILTMLLIVCVSWNADA.

The protein belongs to the scoloptoxin-04 family. Post-translationally, contains 2 disulfide bonds. Expressed by the venom gland.

It is found in the secreted. This is U-scoloptoxin(04)-Er3a from Ethmostigmus rubripes (Giant centipede).